A 273-amino-acid polypeptide reads, in one-letter code: 4-hydroxy-tetrahydrodipicolinate reductase (273 aa).

NAD(+) contacts are provided by residues 12-17 (GAGGRM) and E38. Position 39 (R39) interacts with NADP(+). NAD(+)-binding positions include 102–104 (GTT) and 126–129 (AANF). H159 acts as the Proton donor/acceptor in catalysis. H160 contacts (S)-2,3,4,5-tetrahydrodipicolinate. K163 functions as the Proton donor in the catalytic mechanism. Residue 169–170 (GT) participates in (S)-2,3,4,5-tetrahydrodipicolinate binding.

Belongs to the DapB family. As to quaternary structure, homotetramer.

Its subcellular location is the cytoplasm. It carries out the reaction (S)-2,3,4,5-tetrahydrodipicolinate + NAD(+) + H2O = (2S,4S)-4-hydroxy-2,3,4,5-tetrahydrodipicolinate + NADH + H(+). It catalyses the reaction (S)-2,3,4,5-tetrahydrodipicolinate + NADP(+) + H2O = (2S,4S)-4-hydroxy-2,3,4,5-tetrahydrodipicolinate + NADPH + H(+). It functions in the pathway amino-acid biosynthesis; L-lysine biosynthesis via DAP pathway; (S)-tetrahydrodipicolinate from L-aspartate: step 4/4. In terms of biological role, catalyzes the conversion of 4-hydroxy-tetrahydrodipicolinate (HTPA) to tetrahydrodipicolinate. This is 4-hydroxy-tetrahydrodipicolinate reductase from Escherichia fergusonii (strain ATCC 35469 / DSM 13698 / CCUG 18766 / IAM 14443 / JCM 21226 / LMG 7866 / NBRC 102419 / NCTC 12128 / CDC 0568-73).